A 199-amino-acid chain; its full sequence is Probable nicotinate-nucleotide adenylyltransferase (199 aa).

The protein belongs to the NadD family.

The enzyme catalyses nicotinate beta-D-ribonucleotide + ATP + H(+) = deamido-NAD(+) + diphosphate. It participates in cofactor biosynthesis; NAD(+) biosynthesis; deamido-NAD(+) from nicotinate D-ribonucleotide: step 1/1. Functionally, catalyzes the reversible adenylation of nicotinate mononucleotide (NaMN) to nicotinic acid adenine dinucleotide (NaAD). The polypeptide is Probable nicotinate-nucleotide adenylyltransferase (Leptospira interrogans serogroup Icterohaemorrhagiae serovar copenhageni (strain Fiocruz L1-130)).